A 337-amino-acid polypeptide reads, in one-letter code: GTPase Obg (337 aa).

Residues 1–159 (MQFIDYVKIY…RWVILELKLL (159 aa)) enclose the Obg domain. The OBG-type G domain maps to 160–331 (ADVGLIGLPN…LLHYLSEKVG (172 aa)). GTP is bound by residues 166 to 173 (GLPNAGKS), 191 to 195 (FTTLI), 213 to 216 (DIPG), 283 to 286 (TKID), and 312 to 314 (SAV). Ser-173 and Thr-193 together coordinate Mg(2+).

The protein belongs to the TRAFAC class OBG-HflX-like GTPase superfamily. OBG GTPase family. As to quaternary structure, monomer. It depends on Mg(2+) as a cofactor.

It is found in the cytoplasm. An essential GTPase which binds GTP, GDP and possibly (p)ppGpp with moderate affinity, with high nucleotide exchange rates and a fairly low GTP hydrolysis rate. Plays a role in control of the cell cycle, stress response, ribosome biogenesis and in those bacteria that undergo differentiation, in morphogenesis control. The polypeptide is GTPase Obg (Thermodesulfovibrio yellowstonii (strain ATCC 51303 / DSM 11347 / YP87)).